The sequence spans 476 residues: Cys-Gly metallodipeptidase dug1 (476 aa).

His-99 lines the Zn(2+) pocket. Asp-101 is a catalytic residue. Asp-133 is a Zn(2+) binding site. Glu-167 acts as the Proton acceptor in catalysis. The Zn(2+) site is built by Glu-168, Asp-196, and His-446.

Belongs to the peptidase M20A family. As to quaternary structure, homodimer. Component of the GSH degradosomal complex. Zn(2+) serves as cofactor. Mn(2+) is required as a cofactor.

The protein localises to the cytoplasm. Catalytic component of the GSH degradosomal complex involved in the degradation of glutathione (GSH) and other peptides containing a gamma-glu-X bond. Has a Gly-Cys dipeptidase activity. The sequence is that of Cys-Gly metallodipeptidase dug1 (dug1) from Schizosaccharomyces pombe (strain 972 / ATCC 24843) (Fission yeast).